We begin with the raw amino-acid sequence, 172 residues long: Agamous-like MADS-box protein AGL29 (172 aa).

In terms of domain architecture, MADS-box spans 1–61 (MGRRKIKMEM…GKPFSYGKPN (61 aa)). The stretch at 86-123 (NYRPKLKRLSERLDLLNQEVEAEKERGEKSQEKLESAG) forms a coiled coil. The tract at residues 106-125 (EAEKERGEKSQEKLESAGDE) is disordered.

In terms of tissue distribution, expressed in pollen.

It is found in the nucleus. Functionally, probable transcription factor. This Arabidopsis thaliana (Mouse-ear cress) protein is Agamous-like MADS-box protein AGL29.